The sequence spans 161 residues: Regulator of ribonuclease activity A (161 aa).

This sequence belongs to the RraA family. As to quaternary structure, homotrimer. Binds to both RNA-binding sites in the C-terminal region of Rne and to RhlB.

The protein localises to the cytoplasm. Globally modulates RNA abundance by binding to RNase E (Rne) and regulating its endonucleolytic activity. Can modulate Rne action in a substrate-dependent manner by altering the composition of the degradosome. Modulates RNA-binding and helicase activities of the degradosome. The protein is Regulator of ribonuclease activity A of Salmonella choleraesuis (strain SC-B67).